The primary structure comprises 229 residues: Heptaprenylglyceryl phosphate synthase (229 aa).

Asp-13 and Thr-39 together coordinate Mg(2+).

This sequence belongs to the GGGP/HepGP synthase family. Homodimer. The cofactor is Mg(2+).

The catalysed reaction is sn-glycerol 1-phosphate + all-trans-heptaprenyl diphosphate = 3-heptaprenyl-sn-glycero-1-phosphate + diphosphate. It functions in the pathway membrane lipid metabolism; glycerophospholipid metabolism. Functionally, prenyltransferase that catalyzes in vivo the transfer of the heptaprenyl moiety of heptaprenyl pyrophosphate (HepPP; 35 carbon atoms) to the C3 hydroxyl of sn-glycerol-1-phosphate (G1P), producing heptaprenylglyceryl phosphate (HepGP). This reaction is an ether-bond-formation step in the biosynthesis of archaea-type G1P-based membrane lipids found in Bacillales. The protein is Heptaprenylglyceryl phosphate synthase of Lysinibacillus sphaericus (strain C3-41).